We begin with the raw amino-acid sequence, 515 residues long: Gamma aminobutyrate transaminase 1, mitochondrial (515 aa).

The N-terminal 57 residues, 1 to 57 (MAKISRLFGSTVKAAITAQAGFHGKRIPAVSSLQEHIVKSTPARYNSTQACLENDIS), are a transit peptide targeting the mitochondrion. 172–173 (GS) serves as a coordination point for pyridoxal 5'-phosphate. Y205 provides a ligand contact to substrate. D312 is a pyridoxal 5'-phosphate binding site. Residue K341 coordinates substrate. K341 is modified (N6-(pyridoxal phosphate)lysine).

Belongs to the class-III pyridoxal-phosphate-dependent aminotransferase family. Expressed in leaves, roots, stems, flowers and fruits.

The protein localises to the mitochondrion. The catalysed reaction is 4-aminobutanoate + pyruvate = succinate semialdehyde + L-alanine. It catalyses the reaction 4-aminobutanoate + glyoxylate = succinate semialdehyde + glycine. Transaminase that degrades gamma-amino butyric acid (GABA) and uses pyruvate or glyoxylate as amino-group acceptor. Cannot use beta-alanine, ornithine, acetylornithine, serine, glycine, asparagine, glutamine, glutamate, valine, leucine, isoleucine, methionine, phenylalanine, histidine, lysine, arginine, aspartate, threonine, tyrosine, tryptophan, proline, or cysteine as amino donors. Acts predominantly in vegetative tissues. This is Gamma aminobutyrate transaminase 1, mitochondrial (GABA-TP1) from Solanum lycopersicum (Tomato).